A 162-amino-acid chain; its full sequence is Toluate 1,2-dioxygenase subunit beta (162 aa).

This sequence belongs to the bacterial ring-hydroxylating dioxygenase beta subunit family. In terms of assembly, this dioxygenase system consists of three proteins: the two subunits of the hydroxylase component (XylX and XylY), and an electron transfer component (XylZ).

It participates in xenobiotic degradation; toluene degradation. This Pseudomonas putida (Arthrobacter siderocapsulatus) protein is Toluate 1,2-dioxygenase subunit beta (xylY).